Reading from the N-terminus, the 479-residue chain is Ribosomal RNA small subunit methyltransferase F (479 aa).

S-adenosyl-L-methionine is bound by residues 125 to 131 (AAAPGSK), Glu149, Asp176, and Asp194. Cys247 (nucleophile) is an active-site residue.

The protein belongs to the class I-like SAM-binding methyltransferase superfamily. RsmB/NOP family.

Its subcellular location is the cytoplasm. It carries out the reaction cytidine(1407) in 16S rRNA + S-adenosyl-L-methionine = 5-methylcytidine(1407) in 16S rRNA + S-adenosyl-L-homocysteine + H(+). Its function is as follows. Specifically methylates the cytosine at position 1407 (m5C1407) of 16S rRNA. The chain is Ribosomal RNA small subunit methyltransferase F from Salmonella paratyphi C (strain RKS4594).